The following is a 124-amino-acid chain: Translation initiation factor 5A (124 aa).

A Hypusine modification is found at K36.

Belongs to the eIF-5A family.

It is found in the cytoplasm. In terms of biological role, functions by promoting the formation of the first peptide bond. This Haloquadratum walsbyi (strain DSM 16790 / HBSQ001) protein is Translation initiation factor 5A.